The sequence spans 344 residues: Arginine N-succinyltransferase (344 aa).

Position 125 (leucine 125) interacts with succinyl-CoA. The active-site Proton donor is histidine 229.

This sequence belongs to the arginine N-succinyltransferase family.

It carries out the reaction succinyl-CoA + L-arginine = N(2)-succinyl-L-arginine + CoA + H(+). Its pathway is amino-acid degradation; L-arginine degradation via AST pathway; L-glutamate and succinate from L-arginine: step 1/5. Its function is as follows. Catalyzes the transfer of succinyl-CoA to arginine to produce N(2)-succinylarginine. This Escherichia coli (strain 55989 / EAEC) protein is Arginine N-succinyltransferase.